The primary structure comprises 561 residues: Arginine--tRNA ligase (561 aa).

Residues 136–146 (ANPTGLLHMGN) carry the 'HIGH' region motif.

The protein belongs to the class-I aminoacyl-tRNA synthetase family. As to quaternary structure, monomer.

It is found in the cytoplasm. It carries out the reaction tRNA(Arg) + L-arginine + ATP = L-arginyl-tRNA(Arg) + AMP + diphosphate. In Desulforamulus reducens (strain ATCC BAA-1160 / DSM 100696 / MI-1) (Desulfotomaculum reducens), this protein is Arginine--tRNA ligase.